Reading from the N-terminus, the 161-residue chain is 3-isopropylmalate dehydratase small subunit (161 aa).

The protein belongs to the LeuD family. LeuD type 2 subfamily. As to quaternary structure, heterodimer of LeuC and LeuD.

The enzyme catalyses (2R,3S)-3-isopropylmalate = (2S)-2-isopropylmalate. It functions in the pathway amino-acid biosynthesis; L-leucine biosynthesis; L-leucine from 3-methyl-2-oxobutanoate: step 2/4. Its function is as follows. Catalyzes the isomerization between 2-isopropylmalate and 3-isopropylmalate, via the formation of 2-isopropylmaleate. The protein is 3-isopropylmalate dehydratase small subunit of Metallosphaera sedula (strain ATCC 51363 / DSM 5348 / JCM 9185 / NBRC 15509 / TH2).